We begin with the raw amino-acid sequence, 797 residues long: Methionine--tRNA ligase, cytoplasmic (797 aa).

Residues 26–36 (PYVNNVPHLGN) carry the 'HIGH' region motif. Positions 348-352 (KFSKS) match the 'KMSKS' region motif. Lys351 lines the ATP pocket. Residues 601 to 634 (DQLNKTKLSDAKKQKASSKGGGKPKPQPAADREI) form a disordered region. Positions 635–738 (TMARLDIRVG…KTANIGERVT (104 aa)) constitute a tRNA-binding domain.

The protein belongs to the class-I aminoacyl-tRNA synthetase family.

It is found in the cytoplasm. Its subcellular location is the cytosol. The enzyme catalyses tRNA(Met) + L-methionine + ATP = L-methionyl-tRNA(Met) + AMP + diphosphate. The chain is Methionine--tRNA ligase, cytoplasmic from Arabidopsis thaliana (Mouse-ear cress).